Reading from the N-terminus, the 507-residue chain is Cytochrome P450 52A7 (507 aa).

A helical membrane pass occupies residues 6–26 (LHYWYYVLPAFIIFHWIVSAI). Cys456 contacts heme.

This sequence belongs to the cytochrome P450 family. Heme serves as cofactor.

It localises to the membrane. Functionally, together with an NADPH cytochrome P450 the enzyme system catalyzes the terminal hydroxylation as the first step in the assimilation of alkanes and fatty acids. Preferentially hydroxylates lauric acid. This Candida tropicalis (Yeast) protein is Cytochrome P450 52A7 (CYP52A7).